The primary structure comprises 201 residues: Small ribosomal subunit protein uS4c (201 aa).

Residues 89–150 (MRLDNILFRL…KQRSKVLIQN (62 aa)) form the S4 RNA-binding domain.

This sequence belongs to the universal ribosomal protein uS4 family. As to quaternary structure, part of the 30S ribosomal subunit. Contacts protein S5. The interaction surface between S4 and S5 is involved in control of translational fidelity.

It is found in the plastid. Its subcellular location is the chloroplast. Functionally, one of the primary rRNA binding proteins, it binds directly to 16S rRNA where it nucleates assembly of the body of the 30S subunit. Its function is as follows. With S5 and S12 plays an important role in translational accuracy. The chain is Small ribosomal subunit protein uS4c (rps4) from Acorus calamus (Sweet flag).